A 463-amino-acid polypeptide reads, in one-letter code: Dialkyldecalin synthase (463 aa).

FAD contacts are provided by residues Val13, 32–33 (ER), Ile121, and Asp275.

It belongs to the PheA/TfdB FAD monooxygenase family. In terms of assembly, homodimer. Requires FAD as cofactor.

The catalysed reaction is 4-[(2E,7S,8E,10E,13R,14R,16E,18E)-14-ethyl-7,13-dihydroxy-2,16,18-trimethylicosa-2,8,10,16,18-pentaenoyl]-2-methylidene-5-oxo-2,5-dihydro-1H-pyrrol-3-olate = 4-[(1R,2R,4aS,5S,8aR)-2-[(2R,3R,5E,7E)-3-ethyl-2-hydroxy-5,7-dimethylnona-5,7-dien-1-yl]-5-hydroxy-1-methyl-1,2,4a,5,6,7,8,8a-octahydronaphthalene-1-carbonyl]-2-methylidene-5-oxo-2,5-dihydro-1H-pyrrol-3-olate. It participates in antibiotic biosynthesis. In terms of biological role, involved in the biosynthesis of the spirotetramate antibiotics pyrroindomycins. Catalyzes the intramolecular cyclization forming the dialkyldecalin moiety in pyrroindomycins, via an endo-selective [4+2] cycloaddition reaction. This chain is Dialkyldecalin synthase, found in Streptomyces rugosporus.